The sequence spans 110 residues: Protein SPIRAL1-like 2 (110 aa).

The tract at residues 28-110 is disordered; it reads AVNKTPAETE…LDYLFGGGSN (83 aa). The span at 40-52 shows a compositional bias: low complexity; the sequence is AHAPPTQAAAANA. Over residues 63-82 the composition is skewed to polar residues; sequence LNSNSANNYMRAEGQNTGNF. Ser67 carries the post-translational modification Phosphoserine. The span at 95–110 shows a compositional bias: gly residues; sequence PGGGSSLDYLFGGGSN.

Belongs to the SPIRAL1 family. Ubiquitous.

In terms of biological role, acts redundantly with SPR1 in maintaining the cortical microtubules organization essential for anisotropic cell growth. The sequence is that of Protein SPIRAL1-like 2 (SP1L2) from Arabidopsis thaliana (Mouse-ear cress).